The chain runs to 309 residues: Glycine--tRNA ligase alpha subunit (309 aa).

Belongs to the class-II aminoacyl-tRNA synthetase family. In terms of assembly, tetramer of two alpha and two beta subunits.

Its subcellular location is the cytoplasm. It catalyses the reaction tRNA(Gly) + glycine + ATP = glycyl-tRNA(Gly) + AMP + diphosphate. This is Glycine--tRNA ligase alpha subunit from Anaeromyxobacter sp. (strain K).